A 296-amino-acid chain; its full sequence is uncharacterized protein (296 aa).

One can recognise an FAD-binding FR-type domain in the interval 1–95 (MYKIVSKKEL…VGPLGVPSEF (95 aa)).

This is an uncharacterized protein from Clostridium beijerinckii (Clostridium MP).